The following is a 250-amino-acid chain: Histone H1.1 (250 aa).

Positions 1 to 11 (MSDSAVATSAS) are enriched in polar residues. 2 disordered regions span residues 1–52 (MSDS…QQMV) and 104–250 (QTKG…ATKK). The H15 domain occupies 44 to 118 (SHPPTQQMVD…GASGSFKLSA (75 aa)). Basic and acidic residues predominate over residues 122–133 (KDAKPKASAVEK). Positions 140–161 (ASAARATKSKSSTSTTKKAAGA) are enriched in low complexity. Basic and acidic residues predominate over residues 174-191 (KNVEKKKADKEKAKDAKK). Residues 192–234 (TGTIKAKPTTAKAKSSATKPKTPKPKTTSAKPKKVVSATTPKK) show a composition bias toward low complexity. Residues 235–250 (TAVKKPKAKTASATKK) show a composition bias toward basic residues.

It belongs to the histone H1/H5 family.

It localises to the nucleus. Its subcellular location is the chromosome. Functionally, histones H1 are necessary for the condensation of nucleosome chains into higher-order structures. The sequence is that of Histone H1.1 (His1.1) from Drosophila virilis (Fruit fly).